The following is a 415-amino-acid chain: Multidrug resistance protein MdtA (415 aa).

The N-terminal stretch at 1-21 is a signal peptide; it reads MKGSYKSRWVIVIVVVIAAIA. 2 disordered regions span residues 32–60 and 392–415; these read SRSA…GPLA and EAQS…GARS. Basic and acidic residues predominate over residues 399 to 415; the sequence is PEEKATSREYAKKGARS.

This sequence belongs to the membrane fusion protein (MFP) (TC 8.A.1) family. Part of a tripartite efflux system composed of MdtA, MdtB and MdtC.

The protein localises to the cell inner membrane. In terms of biological role, the MdtABC tripartite complex confers resistance against novobiocin and deoxycholate. In Escherichia coli (strain 55989 / EAEC), this protein is Multidrug resistance protein MdtA.